A 150-amino-acid chain; its full sequence is Large ribosomal subunit protein bL9 (150 aa).

It belongs to the bacterial ribosomal protein bL9 family.

Functionally, binds to the 23S rRNA. In Streptococcus mutans serotype c (strain ATCC 700610 / UA159), this protein is Large ribosomal subunit protein bL9.